The following is a 498-amino-acid chain: MTVFLSFAFFAAILTHIGCSNQRRNPENGGRRYNRIQHGQCAYTFILPEHDGNCRESATEQYNTNALQRDAPHVEPDFSSQKLQHLEHVMENYTQWLQKLENYIVENMKSEMAQIQQNAVQNHTATMLEIGTSLLSQTAEQTRKLTDVETQVLNQTSRLEIQLLENSLSTYKLEKQLLQQTNEILKIHEKNSLLEHKILEMEGKHKEELDTLKEEKENLQGLVSRQTFIIQELEKQLSRATNNNSILQKQQLELMDTVHNLISLCTKEGVLLKGGKREEEKPFRDCADVYQAGFNKSGIYTIYFNNMPEPKKVFCNMDVNGGGWTVIQHREDGSLDFQRGWKEYKMGFGNPSGEYWLGNEFIFAITSQRQYMLRIELMDWEGNRAYSQYDRFHIGNEKQNYRLYLKGHTGTAGKQSSLILHGADFSTKDADNDNCMCKCALMLTGGWWFDACGPSNLNGMFYTAGQNHGKLNGIKWHYFKGPSYSLRSTTMMIRPLDF.

An N-terminal signal peptide occupies residues 1 to 19; it reads MTVFLSFAFFAAILTHIGC. Residues 81 to 119 adopt a coiled-coil conformation; that stretch reads QKLQHLEHVMENYTQWLQKLENYIVENMKSEMAQIQQNA. N-linked (GlcNAc...) asparagine glycans are attached at residues N92, N122, N154, N243, and N295. Residues 153–261 adopt a coiled-coil conformation; it reads LNQTSRLEIQ…LELMDTVHNL (109 aa). In terms of domain architecture, Fibrinogen C-terminal spans 277-497; it reads REEEKPFRDC…STTMMIRPLD (221 aa). 2 disulfides stabilise this stretch: C286/C315 and C439/C452.

In terms of assembly, homooligomer. Interacts with TEK/TIE2. Interacts with SVEP1/polydom. Interacts with THBD; this interaction significantly inhibits the generation of activated PC and TAFIa/CPB2 by the thrombin/thrombomodulin complex.

Its subcellular location is the secreted. In terms of biological role, binds and activates TEK/TIE2 receptor by inducing its dimerization and tyrosine phosphorylation. Plays an important role in the regulation of angiogenesis, endothelial cell survival, proliferation, migration, adhesion and cell spreading, reorganization of the actin cytoskeleton, but also maintenance of vascular quiescence. Required for normal angiogenesis and heart development during embryogenesis. After birth, activates or inhibits angiogenesis, depending on the context. Inhibits angiogenesis and promotes vascular stability in quiescent vessels, where endothelial cells have tight contacts. In quiescent vessels, ANGPT1 oligomers recruit TEK to cell-cell contacts, forming complexes with TEK molecules from adjoining cells, and this leads to preferential activation of phosphatidylinositol 3-kinase and the AKT1 signaling cascades. In migrating endothelial cells that lack cell-cell adhesions, ANGT1 recruits TEK to contacts with the extracellular matrix, leading to the formation of focal adhesion complexes, activation of PTK2/FAK and of the downstream kinases MAPK1/ERK2 and MAPK3/ERK1, and ultimately to the stimulation of sprouting angiogenesis. Mediates blood vessel maturation/stability. Implicated in endothelial developmental processes later and distinct from that of VEGF. Appears to play a crucial role in mediating reciprocal interactions between the endothelium and surrounding matrix and mesenchyme. This chain is Angiopoietin-1 (Angpt1), found in Mus musculus (Mouse).